Here is a 409-residue protein sequence, read N- to C-terminus: Phosphopentomutase (409 aa).

Residues Asp10, Asp308, His313, Asp349, His350, and His361 each coordinate Mn(2+).

This sequence belongs to the phosphopentomutase family. Requires Mn(2+) as cofactor.

It localises to the cytoplasm. The catalysed reaction is 2-deoxy-alpha-D-ribose 1-phosphate = 2-deoxy-D-ribose 5-phosphate. It carries out the reaction alpha-D-ribose 1-phosphate = D-ribose 5-phosphate. The protein operates within carbohydrate degradation; 2-deoxy-D-ribose 1-phosphate degradation; D-glyceraldehyde 3-phosphate and acetaldehyde from 2-deoxy-alpha-D-ribose 1-phosphate: step 1/2. Isomerase that catalyzes the conversion of deoxy-ribose 1-phosphate (dRib-1-P) and ribose 1-phosphate (Rib-1-P) to deoxy-ribose 5-phosphate (dRib-5-P) and ribose 5-phosphate (Rib-5-P), respectively. In Buchnera aphidicola subsp. Schizaphis graminum (strain Sg), this protein is Phosphopentomutase.